Reading from the N-terminus, the 70-residue chain is Small ribosomal subunit protein bS21B (70 aa).

It belongs to the bacterial ribosomal protein bS21 family.

The sequence is that of Small ribosomal subunit protein bS21B from Cupriavidus metallidurans (strain ATCC 43123 / DSM 2839 / NBRC 102507 / CH34) (Ralstonia metallidurans).